Reading from the N-terminus, the 304-residue chain is MKAQKPGLHPRNRHHQRYDLPALCQAHPDLQGYITLNPLGEQTIDFANPQAVKALNKALLAHFYAVKHWDIPDGFLCPPVPGRADYIHHLADLLAGDSGEVPKDATILDIGTGANLIYPLIGAHEYGWRFTGSEINPQAFASAQAIINGNPGLTRQIRLRRQKESQAIFHGVIHKNETYDATLCNPPFHDSAESARAGGERKRRNLGLGAESGLNFGGQQQELWCEGGEVAFISQMIRESQAFARQVKWFTSLVSRGDNLPPLYRLLTEVGAVKVVKKEMAQGQKQSRFIAWSFMDDAKRRRPF.

The protein belongs to the methyltransferase superfamily. METTL16/RlmF family.

It is found in the cytoplasm. The catalysed reaction is adenosine(1618) in 23S rRNA + S-adenosyl-L-methionine = N(6)-methyladenosine(1618) in 23S rRNA + S-adenosyl-L-homocysteine + H(+). In terms of biological role, specifically methylates the adenine in position 1618 of 23S rRNA. In Klebsiella pneumoniae subsp. pneumoniae (strain ATCC 700721 / MGH 78578), this protein is Ribosomal RNA large subunit methyltransferase F.